The following is a 727-amino-acid chain: Polyribonucleotide nucleotidyltransferase (727 aa).

2 residues coordinate Mg(2+): aspartate 491 and aspartate 497. The KH domain occupies proline 558–isoleucine 617. One can recognise an S1 motif domain in the interval glycine 627–lysine 701. Positions leucine 698–serine 727 are disordered. Over residues glycine 717–serine 727 the composition is skewed to polar residues.

This sequence belongs to the polyribonucleotide nucleotidyltransferase family. Mg(2+) serves as cofactor.

It localises to the cytoplasm. It carries out the reaction RNA(n+1) + phosphate = RNA(n) + a ribonucleoside 5'-diphosphate. In terms of biological role, involved in mRNA degradation. Catalyzes the phosphorolysis of single-stranded polyribonucleotides processively in the 3'- to 5'-direction. This Desulfitobacterium hafniense (strain Y51) protein is Polyribonucleotide nucleotidyltransferase.